A 550-amino-acid chain; its full sequence is Methyl-coenzyme M reductase subunit alpha (550 aa).

Position 147 (Q147) interacts with coenzyme F430. Residues R225, 256-257 (KH), and R270 contribute to the coenzyme B site. A Pros-methylhistidine modification is found at H257. 5-methylarginine is present on R271. Position 333 (Y333) interacts with coenzyme M. Q400 carries the post-translational modification 2-methylglutamine. Y444 serves as a coordination point for coenzyme M. Residue G445 is modified to 1-thioglycine. D450 is modified ((Z)-2,3-didehydroaspartate). Position 452 is an S-methylcysteine (C452).

This sequence belongs to the methyl-coenzyme M reductase alpha subunit family. In terms of assembly, MCR is a hexamer of two alpha, two beta, and two gamma chains, forming a dimer of heterotrimers. Requires coenzyme F430 as cofactor. In terms of processing, the alpha subunit contains six modified amino acids near the active site region. Is methylated on His-257, Arg-271, Gln-400 and Cys-452, probably by the action of specific S-adenosylmethionine-dependent methyltransferases. Also contains a thioglycine at position 445, forming a thiopeptide bond. Contains a didehydroaspartate residue at position 450. The methylation on C5 of Arg-271 is a post-translational methylation not essential in vivo, but which plays a role for the stability and structural integrity of MCR.

It localises to the cytoplasm. It catalyses the reaction coenzyme B + methyl-coenzyme M = methane + coenzyme M-coenzyme B heterodisulfide. Its pathway is one-carbon metabolism; methyl-coenzyme M reduction; methane from methyl-coenzyme M: step 1/1. Its function is as follows. Component of the methyl-coenzyme M reductase (MCR) I that catalyzes the reductive cleavage of methyl-coenzyme M (CoM-S-CH3 or 2-(methylthio)ethanesulfonate) using coenzyme B (CoB or 7-mercaptoheptanoylthreonine phosphate) as reductant which results in the production of methane and the mixed heterodisulfide of CoB and CoM (CoM-S-S-CoB). This is the final step in methanogenesis. In Methanothermobacter thermautotrophicus (strain ATCC 29096 / DSM 1053 / JCM 10044 / NBRC 100330 / Delta H) (Methanobacterium thermoautotrophicum), this protein is Methyl-coenzyme M reductase subunit alpha (mcrA).